The sequence spans 314 residues: tRNA dimethylallyltransferase (314 aa).

13-20 (GPTAVGKT) contacts ATP. Substrate is bound at residue 15-20 (TAVGKT). Residues 38 to 41 (DSMQ) form an interaction with substrate tRNA region.

It belongs to the IPP transferase family. As to quaternary structure, monomer. Mg(2+) serves as cofactor.

It catalyses the reaction adenosine(37) in tRNA + dimethylallyl diphosphate = N(6)-dimethylallyladenosine(37) in tRNA + diphosphate. In terms of biological role, catalyzes the transfer of a dimethylallyl group onto the adenine at position 37 in tRNAs that read codons beginning with uridine, leading to the formation of N6-(dimethylallyl)adenosine (i(6)A). The sequence is that of tRNA dimethylallyltransferase from Bacillus licheniformis (strain ATCC 14580 / DSM 13 / JCM 2505 / CCUG 7422 / NBRC 12200 / NCIMB 9375 / NCTC 10341 / NRRL NRS-1264 / Gibson 46).